The chain runs to 433 residues: Tubulin epsilon and delta complex protein 2 (433 aa).

3 disordered regions span residues 45 to 69, 95 to 169, and 326 to 345; these read TGTR…ACTP, TKAG…VGMG, and QPPR…SCGG. Residues 107–120 show a composition bias toward polar residues; that stretch reads KSRSIVTSSGTTAS. Serine 159 carries the phosphoserine modification. The span at 327-339 shows a compositional bias: pro residues; it reads PPRPCPVGRPPGA.

Interacts with TEDC1. Found in a complex with TEDC1, TEDC2, TUBE1 and TUBD1.

It localises to the cell projection. It is found in the cilium. The protein localises to the cytoplasm. Its subcellular location is the cytoskeleton. The protein resides in the microtubule organizing center. It localises to the centrosome. It is found in the centriole. In terms of biological role, acts as a positive regulator of ciliary hedgehog signaling. Required for centriole stability. The protein is Tubulin epsilon and delta complex protein 2 of Homo sapiens (Human).